We begin with the raw amino-acid sequence, 352 residues long: tRNA-specific 2-thiouridylase MnmA (352 aa).

ATP-binding positions include 7-14 (GLSGGVDS) and Leu33. Catalysis depends on Cys94, which acts as the Nucleophile. A disulfide bridge links Cys94 with Cys193. ATP is bound at residue Gly119. An interaction with tRNA region spans residues 143-145 (KDQ). Cys193 functions as the Cysteine persulfide intermediate in the catalytic mechanism. The segment at 298-299 (RY) is interaction with tRNA.

This sequence belongs to the MnmA/TRMU family.

It localises to the cytoplasm. It catalyses the reaction S-sulfanyl-L-cysteinyl-[protein] + uridine(34) in tRNA + AH2 + ATP = 2-thiouridine(34) in tRNA + L-cysteinyl-[protein] + A + AMP + diphosphate + H(+). Its function is as follows. Catalyzes the 2-thiolation of uridine at the wobble position (U34) of tRNA, leading to the formation of s(2)U34. In Microcystis aeruginosa (strain NIES-843 / IAM M-2473), this protein is tRNA-specific 2-thiouridylase MnmA.